An 83-amino-acid chain; its full sequence is Gas vesicle protein G1 (83 aa).

This sequence belongs to the gas vesicle GvpG family. In terms of assembly, gvpF to GvpM interact with each other in vitro, and may form multi-subunit complex(es). Might interact with GvpA1.

It is found in the gas vesicle. In terms of biological role, proteins GvpF to GvpM might be involved in nucleating gas vesicle formation. A minor component of the gas vesicle. Gas vesicles are hollow, gas filled proteinaceous nanostructures found in several microbial planktonic microorganisms. They allow positioning of halobacteria at the optimal depth for growth in the poorly aerated, shallow brine pools of their habitat. Its function is as follows. Expression of a 9.5 kb p-vac DNA fragment containing 2 divergently transcribed regions (gvpD-gvpE-gvpF-gvpG-gvpH-gvpI-gvpJ-gvpK-gvpL-gvpM and gvpA-gvpC-gvpN-gvpO) allows H.volcanii to produce gas vesicles. A minimal gas vesicle can be made in H.volcanii by gvpA1-gvpO1 plus gvpF1-gvpG1-gvpJ1-gvpK1-gvpL1-gvpM1; lack of enough GvpJ1 prevents formation. A similar region restores gas vesicle production in H.halobium without the p-vac locus, but it still has the c-vac locus. The sequence is that of Gas vesicle protein G1 (gvpG11) from Halobacterium salinarum (strain ATCC 700922 / JCM 11081 / NRC-1) (Halobacterium halobium).